The following is a 438-amino-acid chain: Asparagine--tRNA ligase (438 aa).

It belongs to the class-II aminoacyl-tRNA synthetase family. In terms of assembly, homodimer.

Its subcellular location is the cytoplasm. The catalysed reaction is tRNA(Asn) + L-asparagine + ATP = L-asparaginyl-tRNA(Asn) + AMP + diphosphate + H(+). This is Asparagine--tRNA ligase from Thermus thermophilus (strain ATCC 27634 / DSM 579 / HB8).